The primary structure comprises 684 residues: U4/U6 small nuclear ribonucleoprotein Prp3 (684 aa).

The PWI domain maps to 1–87 (MSLSKRELDE…HSKSNSDRNR (87 aa)). Basic and acidic residues predominate over residues 73-107 (GRSSRHSKSNSDRNRKRELKDVFGDDSEVSKESSG). Disordered stretches follow at residues 73–109 (GRSS…SGVK) and 162–183 (FISP…RLPI). Positions 170–183 (PKISSSSQSERLPI) are enriched in polar residues.

As to quaternary structure, component of the precatalytic spliceosome (spliceosome B complex). Component of the U4/U6-U5 tri-snRNP complex, a building block of the precatalytic spliceosome (spliceosome B complex). The U4/U6-U5 tri-snRNP complex is composed of the U4, U6 and U5 snRNAs and at least PRPF3, PRPF4, PRPF6, PRPF8, PRPF31, SNRNP200, TXNL4A, SNRNP40, SNRPB, SNRPD1, SNRPD2, SNRPD3, SNRPE, SNRPF, SNRPG, DDX23, CD2BP2, PPIH, SNU13, EFTUD2, SART1 and USP39, plus LSM2, LSM3, LSM4, LSM5, LSM6, LSM7 and LSM8.

The protein localises to the nucleus. It is found in the nucleus speckle. Functionally, plays a role in pre-mRNA splicing as component of the U4/U6-U5 tri-snRNP complex that is involved in spliceosome assembly, and as component of the precatalytic spliceosome (spliceosome B complex). This Gallus gallus (Chicken) protein is U4/U6 small nuclear ribonucleoprotein Prp3 (PRPF3).